Consider the following 565-residue polypeptide: Efflux pump aunC (565 aa).

Residues 1–14 (MSDTARISGGSFTS) show a composition bias toward polar residues. The tract at residues 1-57 (MSDTARISGGSFTSPPGRDVELNSFKEASQTRLYPYSSRKEEEGREDEQQRPEREED) is disordered. Residues 38–54 (SRKEEEGREDEQQRPER) show a composition bias toward basic and acidic residues. 14 helical membrane passes run 59–79 (GALT…CIFC), 103–123 (DVGW…LPFG), 128–148 (FFPI…GSFI), 164–184 (VAGL…TQCV), 194–214 (GFIM…GGAF), 222–242 (WCFY…FFTF), 257–277 (AAGL…CLLL), 293–313 (IIAL…LQLW), 335–355 (LYGF…PIWF), 378–398 (VIFA…GPFM), 399–419 (LLSA…HPSS), 425–445 (IGYQ…PVFV), 457–477 (TATA…VSVA), and 530–550 (VHTF…ATVI).

Belongs to the major facilitator superfamily. TCR/Tet family.

It is found in the cell membrane. Its function is as follows. Efflux pump; part of the gene cluster that mediates the biosynthesis of aurasperone B, a dimeric gamma-naphthopyrone. This Aspergillus niger (strain ATCC MYA-4892 / CBS 513.88 / FGSC A1513) protein is Efflux pump aunC.